Reading from the N-terminus, the 278-residue chain is Nucleotide-binding protein Tmel_1373 (278 aa).

10–17 (GLSGAGKS) is a binding site for ATP. 58–61 (DSRS) provides a ligand contact to GTP.

The protein belongs to the RapZ-like family.

Functionally, displays ATPase and GTPase activities. This Thermosipho melanesiensis (strain DSM 12029 / CIP 104789 / BI429) protein is Nucleotide-binding protein Tmel_1373.